A 428-amino-acid chain; its full sequence is 3-phosphoshikimate 1-carboxyvinyltransferase (428 aa).

3-phosphoshikimate-binding residues include Lys-19, Ser-20, and Arg-24. Lys-19 is a phosphoenolpyruvate binding site. Phosphoenolpyruvate-binding residues include Gly-91 and Arg-119. Residues Ser-164, Gln-166, Asp-312, and Lys-339 each contribute to the 3-phosphoshikimate site. Residue Gln-166 coordinates phosphoenolpyruvate. The Proton acceptor role is filled by Asp-312. Residues Arg-343 and Arg-386 each contribute to the phosphoenolpyruvate site.

It belongs to the EPSP synthase family. As to quaternary structure, monomer.

The protein resides in the cytoplasm. It catalyses the reaction 3-phosphoshikimate + phosphoenolpyruvate = 5-O-(1-carboxyvinyl)-3-phosphoshikimate + phosphate. The protein operates within metabolic intermediate biosynthesis; chorismate biosynthesis; chorismate from D-erythrose 4-phosphate and phosphoenolpyruvate: step 6/7. Functionally, catalyzes the transfer of the enolpyruvyl moiety of phosphoenolpyruvate (PEP) to the 5-hydroxyl of shikimate-3-phosphate (S3P) to produce enolpyruvyl shikimate-3-phosphate and inorganic phosphate. The chain is 3-phosphoshikimate 1-carboxyvinyltransferase from Bacillus licheniformis (strain ATCC 14580 / DSM 13 / JCM 2505 / CCUG 7422 / NBRC 12200 / NCIMB 9375 / NCTC 10341 / NRRL NRS-1264 / Gibson 46).